The following is a 714-amino-acid chain: Methylmalonyl-CoA mutase (714 aa).

The B12-binding domain occupies 584-714 (RPRILIAKMG…VLNLISQHHD (131 aa)). Histidine 597 provides a ligand contact to adenosylcob(III)alamin.

It belongs to the methylmalonyl-CoA mutase family. Homodimer. Interacts with ArgK. It depends on adenosylcob(III)alamin as a cofactor.

The catalysed reaction is (R)-methylmalonyl-CoA = succinyl-CoA. Functionally, catalyzes the interconversion of succinyl-CoA and methylmalonyl-CoA. Could be part of a pathway that converts succinate to propionate. This chain is Methylmalonyl-CoA mutase (scpA), found in Escherichia coli (strain K12).